Here is a 639-residue protein sequence, read N- to C-terminus: 1-deoxy-D-xylulose-5-phosphate synthase (639 aa).

Thiamine diphosphate is bound by residues H79 and 120 to 122 (GHS). Residue D151 coordinates Mg(2+). Residues 152–153 (GS), N180, Y289, and E371 each bind thiamine diphosphate. N180 provides a ligand contact to Mg(2+).

This sequence belongs to the transketolase family. DXPS subfamily. In terms of assembly, homodimer. Requires Mg(2+) as cofactor. Thiamine diphosphate is required as a cofactor.

It catalyses the reaction D-glyceraldehyde 3-phosphate + pyruvate + H(+) = 1-deoxy-D-xylulose 5-phosphate + CO2. Its pathway is metabolic intermediate biosynthesis; 1-deoxy-D-xylulose 5-phosphate biosynthesis; 1-deoxy-D-xylulose 5-phosphate from D-glyceraldehyde 3-phosphate and pyruvate: step 1/1. Functionally, catalyzes the acyloin condensation reaction between C atoms 2 and 3 of pyruvate and glyceraldehyde 3-phosphate to yield 1-deoxy-D-xylulose-5-phosphate (DXP). The chain is 1-deoxy-D-xylulose-5-phosphate synthase from Agrobacterium fabrum (strain C58 / ATCC 33970) (Agrobacterium tumefaciens (strain C58)).